We begin with the raw amino-acid sequence, 555 residues long: CCR4-NOT transcription complex subunit 6-like (555 aa).

The interval 1–152 is required for interaction with CNOT1, CNOT3 and CNOT7; that stretch reads MRLIGMPKEK…SLYQDPDGTR (152 aa). LRR repeat units lie at residues 57 to 78, 80 to 101, 103 to 125, and 126 to 148; these read HLTA…IAKL, NLVY…LGNM, SLRE…GRLF, and QLQT…YQDP. The nuclease domain stretch occupies residues 158 to 555; the sequence is MLDNLAVHPE…VNGVHLPNRR (398 aa). Residue Glu-240 coordinates Mg(2+). 4 residues coordinate substrate: Glu-240, Glu-276, His-360, and Pro-365. Position 410 (Asp-410) interacts with Mg(2+). The Proton donor/acceptor role is filled by Asp-410. Residues Asn-412, Asn-479, and Phe-484 each coordinate substrate.

The protein belongs to the CCR4/nocturin family. In terms of assembly, component of the CCR4-NOT complex; distinct complexes seem to exist that differ in the participation of probably mutually exclusive catalytic subunits; the complex contains two deadenylase subunits, CNOT6 or CNOT6L, and CNOT7 or CNOT8. Interacts with CNOT1, CNOT3, CNOT7, CNOT8 and CNOT9. Interacts with TOB1. Interacts with NANOS2. Interacts with ZFP36. Interacts with ZFP36L2. Interacts with RBM46. The cofactor is Mg(2+).

The protein localises to the cytoplasm. It is found in the nucleus. The catalysed reaction is Exonucleolytic cleavage of poly(A) to 5'-AMP.. Poly(A) nuclease with 3'-5' RNase activity. Catalytic component of the CCR4-NOT complex which is one of the major cellular mRNA deadenylases and is linked to various cellular processes including bulk mRNA degradation, miRNA-mediated repression, translational repression during translational initiation and general transcription regulation. Additional complex functions may be a consequence of its influence on mRNA expression. Involved in mRNA decay mediated by the major-protein-coding determinant of instability (mCRD) of the FOS gene in the cytoplasm. Involved in deadenylation-dependent degradation of CDKN1B mRNA. Its mRNA deadenylase activity can be inhibited by TOB1. Mediates cell proliferation and cell survival and prevents cellular senescence. The protein is CCR4-NOT transcription complex subunit 6-like (Cnot6l) of Mus musculus (Mouse).